The primary structure comprises 926 residues: MLAEKMGAITLHCMPVASTPTRRGRPPGSSAARASNGAGSEAATAIPAGATPAMAQWFVLKNQHPDALLFFRMGDFYELFFQDAENAAATLDIQLTKRGLHEGEPIPMCGVPVHAAEMYLSRLIRRGWRVAIVEQMENPKNRAGKGPIRRDVVRLVTPGTITEETLLDAGRPNLLLAITQSGNRLGAAWLDISTGLFETESLDESGLTALLGRLDPAEILCPSSLHLEMWDARRGPEQPVSDPANARARLAEAYDVSHINVFGSFTDAEAMAAMQALDYVRDAQMGALPRLGHPVPVGEAGRLAMDASTRASLEIDRARDGGTERTLLSAVQRTLTPAGGRMLAAWLGAPLTDRTVITARQDGWGWLLEQPTLSMRLRETLRGCPDMARALGRIALGRGTPRDLAAIRDGAHIAMEAAGLLEGILPSALAELHAALHLPPDLPEMLEAALADPVPARIEDGGVIASGFDGELDAERGLRDDSRKVIAALQTEYAQRYGVASLKIRHHAQLGYMIEVPAVAVETLRTVPELILRQGMANGARFTHPDLSELDRRITEAAERARQREMIVITALRQKVEAHAGSIAACAEALARLDVLQSAARLAESGTWCRPVMTDDQTLTIEAGRHPVVEAALEGGPTPFMPNDTDLSASRRVMLLTGPNMAGKSTYLRQNALIVILAQAGLPVPARAAHIGIVDRLFSRVGASDDLARGQSTFMVEMTETAAILHQAGPRSLVVVDEIGRGTSTLDGLAIAWAVLEALHSRIGARTIFATHFHELARLQGELPMLRPYTMKVQEWRGKVVFLHEVAEGAGGRSWGVHVAKLAGVPAATVRRAGQLLTALEERSVGLTDNATLPLFAASHGNETETEPAEGIHEAKPASLPPELIEALGQMEPDKLTPREALDLMYHFKSMLSSQAHNGDVEAESW.

The segment at 16 to 40 (VASTPTRRGRPPGSSAARASNGAGS) is disordered. The segment covering 26 to 40 (PPGSSAARASNGAGS) has biased composition (low complexity). Residue 658–665 (GPNMAGKS) coordinates ATP.

Belongs to the DNA mismatch repair MutS family.

Its function is as follows. This protein is involved in the repair of mismatches in DNA. It is possible that it carries out the mismatch recognition step. This protein has a weak ATPase activity. The protein is DNA mismatch repair protein MutS of Granulibacter bethesdensis (strain ATCC BAA-1260 / CGDNIH1).